The chain runs to 148 residues: Pseudoazurin (148 aa).

An N-terminal signal peptide occupies residues 1–25 (MMIFRALIAAATLAIAIATTLPAAA). In terms of domain architecture, Plastocyanin-like spans 30–118 (VKMLNSGPGG…MGMVALVVVG (89 aa)). The Cu cation site is built by His-65, Cys-103, His-106, and Met-111.

Requires Cu cation as cofactor.

Its subcellular location is the periplasm. In Methylorubrum extorquens (strain ATCC 14718 / DSM 1338 / JCM 2805 / NCIMB 9133 / AM1) (Methylobacterium extorquens), this protein is Pseudoazurin.